A 1072-amino-acid polypeptide reads, in one-letter code: Carbamoyl phosphate synthase large chain (1072 aa).

The segment at 1 to 401 (MPKRLDINTI…SLLKAVRSLE (401 aa)) is carboxyphosphate synthetic domain. ATP-binding residues include Arg129, Arg169, Gly175, Gly176, Lys208, Ile210, Glu215, Gly241, Val242, His243, Gln284, and Glu298. An ATP-grasp 1 domain is found at 133–327 (RTLMQELNEP…IAKLAAKIAV (195 aa)). Positions 284, 298, and 300 each coordinate Mg(2+). Mn(2+)-binding residues include Gln284, Glu298, and Asn300. The oligomerization domain stretch occupies residues 402-546 (LGVYHLELEH…YSTYGDENES (145 aa)). Residues 547-929 (VRTDRKSVVV…ALYKGLVASG (383 aa)) are carbamoyl phosphate synthetic domain. Positions 671–861 (EAALTQLGIP…MANVATKVIL (191 aa)) constitute an ATP-grasp 2 domain. ATP is bound by residues Arg707, Arg746, Glu752, Gly777, Val778, His779, Ser780, Gln820, and Glu832. Residues Gln820, Glu832, and Asn834 each coordinate Mg(2+). Residues Gln820, Glu832, and Asn834 each contribute to the Mn(2+) site. One can recognise an MGS-like domain in the interval 930-1072 (INIPTHGSVI…QTKRHEVVHA (143 aa)). Residues 930 to 1072 (INIPTHGSVI…QTKRHEVVHA (143 aa)) form an allosteric domain region.

Belongs to the CarB family. In terms of assembly, composed of two chains; the small (or glutamine) chain promotes the hydrolysis of glutamine to ammonia, which is used by the large (or ammonia) chain to synthesize carbamoyl phosphate. Tetramer of heterodimers (alpha,beta)4. Mg(2+) is required as a cofactor. Requires Mn(2+) as cofactor.

It catalyses the reaction hydrogencarbonate + L-glutamine + 2 ATP + H2O = carbamoyl phosphate + L-glutamate + 2 ADP + phosphate + 2 H(+). The catalysed reaction is hydrogencarbonate + NH4(+) + 2 ATP = carbamoyl phosphate + 2 ADP + phosphate + 2 H(+). Its pathway is amino-acid biosynthesis; L-arginine biosynthesis; carbamoyl phosphate from bicarbonate: step 1/1. It participates in pyrimidine metabolism; UMP biosynthesis via de novo pathway; (S)-dihydroorotate from bicarbonate: step 1/3. Large subunit of the glutamine-dependent carbamoyl phosphate synthetase (CPSase). CPSase catalyzes the formation of carbamoyl phosphate from the ammonia moiety of glutamine, carbonate, and phosphate donated by ATP, constituting the first step of 2 biosynthetic pathways, one leading to arginine and/or urea and the other to pyrimidine nucleotides. The large subunit (synthetase) binds the substrates ammonia (free or transferred from glutamine from the small subunit), hydrogencarbonate and ATP and carries out an ATP-coupled ligase reaction, activating hydrogencarbonate by forming carboxy phosphate which reacts with ammonia to form carbamoyl phosphate. This chain is Carbamoyl phosphate synthase large chain, found in Bacillus cereus (strain G9842).